The following is a 770-amino-acid chain: Serine/threonine-protein kinase PLK4 (770 aa).

The 254-residue stretch at 14–267 (YEVQHLLGKG…LEHVLRHPFL (254 aa)) folds into the Protein kinase domain. ATP is bound by residues 20 to 28 (LGKGGFASV) and lysine 43. The Proton acceptor role is filled by aspartate 138. The Cryptic POLO box 1 (CPB1) domain occupies 383–500 (EERISVPPLN…DRFVGLVKSK (118 aa)). One can recognise a Cryptic POLO box 2 (CPB2) domain in the interval 501 to 604 (TPKVTYFSAL…GRRPVTEVQP (104 aa)). The POLO box domain maps to 662 to 741 (PIKRINLPDI…LPHIQLKLKT (80 aa)).

The protein belongs to the protein kinase superfamily. Ser/Thr protein kinase family. CDC5/Polo subfamily. In terms of assembly, homodimer. Post-translationally, ubiquitinated by the SCF(Slimb) ubiquitin ligase complex; leading to its degradation by the proteasome during interphase and regulating centriole number and ensuring the block to centriole reduplication.

It is found in the cytoplasm. The protein resides in the cytoskeleton. Its subcellular location is the microtubule organizing center. It localises to the centrosome. The protein localises to the centriole. It catalyses the reaction L-seryl-[protein] + ATP = O-phospho-L-seryl-[protein] + ADP + H(+). It carries out the reaction L-threonyl-[protein] + ATP = O-phospho-L-threonyl-[protein] + ADP + H(+). Serine/threonine-protein kinase that plays a central role in centriole duplication. Able to trigger procentriole formation on the surface of the mother centriole cylinder, using mother centriole as a platform, leading to the recruitment of centriole biogenesis proteins such as sas-6. When overexpressed, it is able to induce centrosome amplification through the simultaneous generation of multiple procentrioles adjoining each parental centriole during S phase. Centrosome amplification following overexpression can initiate tumorigenesis, highlighting the importance of centrosome regulation in cancers. This is Serine/threonine-protein kinase PLK4 (SAK) from Drosophila ananassae (Fruit fly).